Consider the following 1520-residue polypeptide: DNA topoisomerase 2 top-2 (1520 aa).

Residues 1 to 10 (MSDSDSEFSI) show a composition bias toward acidic residues. The tract at residues 1 to 40 (MSDSDSEFSIEDSPKKKTAPKKEKASPKKKKDDANESMVM) is disordered. Over residues 12 to 34 (DSPKKKTAPKKEKASPKKKKDDA) the composition is skewed to basic and acidic residues. ATP contacts are provided by residues asparagine 126, asparagine 155, 183–185 (SSN), 196–203 (GRNGYGAK), and 411–413 (QTK). One can recognise a Toprim domain in the interval 490–607 (CTLILTEGDS…SLIQRNFVEE (118 aa)). Glutamate 496, aspartate 576, and aspartate 578 together coordinate Mg(2+). Residues 750 to 1219 (IPCLVDGFKP…TWQDLWHEDL (470 aa)) enclose the Topo IIA-type catalytic domain. The active-site O-(5'-phospho-DNA)-tyrosine intermediate is the tyrosine 840. Residues 1249 to 1520 (AADAKTGRGP…RGRVVDSDSD (272 aa)) form a disordered region. Basic and acidic residues predominate over residues 1283–1320 (TKAKYEKMSQPKKERVKKEPKEPKEPKKVKKEGQDIKK). Over residues 1342–1364 (MSEESDVEFDEGIDFDSDDDGVE) the composition is skewed to acidic residues.

It belongs to the type II topoisomerase family. Homodimer. Interacts with nmad-1; the interaction is required for localization of top-2 to DNA. Interacts with gcna-1; this interaction allows the resolution of topoisomerase 2 DNA-protein cross-links. Requires Mg(2+) as cofactor. It depends on Mn(2+) as a cofactor. Ca(2+) is required as a cofactor. Expressed in the hermaphrodite and male germline.

The protein localises to the nucleus. It localises to the nucleoplasm. Its subcellular location is the chromosome. The protein resides in the cytoplasm. It is found in the cytoskeleton. The protein localises to the spindle. It carries out the reaction ATP-dependent breakage, passage and rejoining of double-stranded DNA.. Functionally, control of topological states of DNA by transient breakage and subsequent rejoining of DNA strands. Topoisomerase II makes double-strand breaks. Essential during mitosis in the adult germline and during embryogenesis for proper segregation of daughter chromosomes. Required for centromere resolution during mitosis. Required for chromosome segregation in anaphase of meiosis I during spermatogenesis. Promotes cleavage furrow stability during cytokinesis upon the presence of chromatin obstructions. Promotes DNA break formation upon zygotic genome activation in the Z2 and Z3 primordial germ cells in L1 larvae, thereby activating a checkpoint response. Essential for embryogenesis. In Caenorhabditis elegans, this protein is DNA topoisomerase 2 top-2.